Consider the following 290-residue polypeptide: ATP synthase gamma chain (290 aa).

The protein belongs to the ATPase gamma chain family. As to quaternary structure, F-type ATPases have 2 components, CF(1) - the catalytic core - and CF(0) - the membrane proton channel. CF(1) has five subunits: alpha(3), beta(3), gamma(1), delta(1), epsilon(1). CF(0) has three main subunits: a, b and c.

Its subcellular location is the cell inner membrane. Its function is as follows. Produces ATP from ADP in the presence of a proton gradient across the membrane. The gamma chain is believed to be important in regulating ATPase activity and the flow of protons through the CF(0) complex. The polypeptide is ATP synthase gamma chain (Phenylobacterium zucineum (strain HLK1)).